The primary structure comprises 142 residues: 3-hydroxyacyl-[acyl-carrier-protein] dehydratase FabZ (142 aa).

Histidine 48 is a catalytic residue.

Belongs to the thioester dehydratase family. FabZ subfamily.

The protein resides in the cytoplasm. It catalyses the reaction a (3R)-hydroxyacyl-[ACP] = a (2E)-enoyl-[ACP] + H2O. Involved in unsaturated fatty acids biosynthesis. Catalyzes the dehydration of short chain beta-hydroxyacyl-ACPs and long chain saturated and unsaturated beta-hydroxyacyl-ACPs. The polypeptide is 3-hydroxyacyl-[acyl-carrier-protein] dehydratase FabZ (Anoxybacillus flavithermus (strain DSM 21510 / WK1)).